The chain runs to 60 residues: Short neurotoxin 1 (60 aa).

Intrachain disulfides connect C3–C22, C17–C39, C41–C52, and C53–C58.

This sequence belongs to the three-finger toxin family. Short-chain subfamily. Type I alpha-neurotoxin sub-subfamily. Expressed by the venom gland.

Its subcellular location is the secreted. In terms of biological role, binds to muscle nicotinic acetylcholine receptor (nAChR) and inhibit acetylcholine from binding to the receptor, thereby impairing neuromuscular transmission. The recombinant protein also barely blocks voltage-gated potassium channel Kv1.3/KCNA3 (2.71% inhibition at 60 nM of toxin). This chain is Short neurotoxin 1, found in Hydrophis lapemoides (Persian gulf sea snake).